Reading from the N-terminus, the 338-residue chain is Glyceraldehyde-3-phosphate dehydrogenase (338 aa).

Residues 12-13, Asp34, and Arg80 contribute to the NAD(+) site; that span reads RI. Residues 151–153, Thr182, 211–212, and Arg234 contribute to the D-glyceraldehyde 3-phosphate site; these read SCT and TG. The active-site Nucleophile is the Cys152. Asn316 contributes to the NAD(+) binding site.

It belongs to the glyceraldehyde-3-phosphate dehydrogenase family. Homotetramer.

It localises to the cytoplasm. It catalyses the reaction D-glyceraldehyde 3-phosphate + phosphate + NAD(+) = (2R)-3-phospho-glyceroyl phosphate + NADH + H(+). It functions in the pathway carbohydrate degradation; glycolysis; pyruvate from D-glyceraldehyde 3-phosphate: step 1/5. The polypeptide is Glyceraldehyde-3-phosphate dehydrogenase (GPD) (Paracoccidioides lutzii (strain ATCC MYA-826 / Pb01) (Paracoccidioides brasiliensis)).